The primary structure comprises 147 residues: Hemoglobin subunit delta (147 aa).

In terms of domain architecture, Globin spans 3–147; the sequence is HLTPEEKALV…VANALAHKYH (145 aa). Ser51 is subject to Phosphoserine. The heme b site is built by His64 and His93.

The protein belongs to the globin family. As to quaternary structure, heterotetramer of two delta chains and two alpha chains. In terms of tissue distribution, red blood cells.

In Trichechus manatus (Caribbean manatee), this protein is Hemoglobin subunit delta (HBD).